We begin with the raw amino-acid sequence, 98 residues long: Phosphoribosyl-ATP pyrophosphatase (98 aa).

It belongs to the PRA-PH family.

It localises to the cytoplasm. The enzyme catalyses 1-(5-phospho-beta-D-ribosyl)-ATP + H2O = 1-(5-phospho-beta-D-ribosyl)-5'-AMP + diphosphate + H(+). Its pathway is amino-acid biosynthesis; L-histidine biosynthesis; L-histidine from 5-phospho-alpha-D-ribose 1-diphosphate: step 2/9. This is Phosphoribosyl-ATP pyrophosphatase from Pelotomaculum thermopropionicum (strain DSM 13744 / JCM 10971 / SI).